The following is a 336-amino-acid chain: GTP 3',8-cyclase (336 aa).

One can recognise a Radical SAM core domain in the interval 16-241 (AYRRTYYYLR…QSKGITDGPA (226 aa)). Arginine 25 lines the GTP pocket. Residues cysteine 32 and cysteine 36 each coordinate [4Fe-4S] cluster. Tyrosine 38 contributes to the S-adenosyl-L-methionine binding site. Cysteine 39 lines the [4Fe-4S] cluster pocket. Residue arginine 75 coordinates GTP. Glycine 79 is a binding site for S-adenosyl-L-methionine. Threonine 106 provides a ligand contact to GTP. S-adenosyl-L-methionine is bound at residue serine 130. A GTP-binding site is contributed by lysine 167. Position 201 (methionine 201) interacts with S-adenosyl-L-methionine. [4Fe-4S] cluster-binding residues include cysteine 264 and cysteine 267. Residue 269–271 (RLR) coordinates GTP. Cysteine 281 contributes to the [4Fe-4S] cluster binding site.

It belongs to the radical SAM superfamily. MoaA family. As to quaternary structure, monomer and homodimer. The cofactor is [4Fe-4S] cluster.

The enzyme catalyses GTP + AH2 + S-adenosyl-L-methionine = (8S)-3',8-cyclo-7,8-dihydroguanosine 5'-triphosphate + 5'-deoxyadenosine + L-methionine + A + H(+). It participates in cofactor biosynthesis; molybdopterin biosynthesis. Catalyzes the cyclization of GTP to (8S)-3',8-cyclo-7,8-dihydroguanosine 5'-triphosphate. The polypeptide is GTP 3',8-cyclase (Actinobacillus succinogenes (strain ATCC 55618 / DSM 22257 / CCUG 43843 / 130Z)).